A 268-amino-acid polypeptide reads, in one-letter code: Nickel import ATP-binding protein NikE (268 aa).

The 249-residue stretch at 4–252 (LNVCGLSHHY…SSDAGRVLQN (249 aa)) folds into the ABC transporter domain. Residue 45–52 (GRSGCGKS) coordinates ATP.

The protein belongs to the ABC transporter superfamily. Nickel importer (TC 3.A.1.5.3) family. The complex is composed of two ATP-binding proteins (NikD and NikE), two transmembrane proteins (NikB and NikC) and a solute-binding protein (NikA).

It is found in the cell inner membrane. It catalyses the reaction Ni(2+)(out) + ATP + H2O = Ni(2+)(in) + ADP + phosphate + H(+). Part of the ABC transporter complex NikABCDE involved in nickel import. Responsible for energy coupling to the transport system. This Shigella flexneri serotype 5b (strain 8401) protein is Nickel import ATP-binding protein NikE.